We begin with the raw amino-acid sequence, 284 residues long: Acetylglutamate kinase (284 aa).

Substrate is bound by residues 64 to 65 (GG), arginine 86, and asparagine 181.

It belongs to the acetylglutamate kinase family. ArgB subfamily.

The protein resides in the cytoplasm. It catalyses the reaction N-acetyl-L-glutamate + ATP = N-acetyl-L-glutamyl 5-phosphate + ADP. It functions in the pathway amino-acid biosynthesis; L-arginine biosynthesis; N(2)-acetyl-L-ornithine from L-glutamate: step 2/4. Functionally, catalyzes the ATP-dependent phosphorylation of N-acetyl-L-glutamate. The sequence is that of Acetylglutamate kinase from Nitratiruptor sp. (strain SB155-2).